The sequence spans 287 residues: MISPLEKAGILVEALPYIKKFSGKTIVIKYGGHAMLNADLKKAVMTDLVLMKFVGINPVVVHGGGPEITGMLHRLGIESQFVSGLRVTDAPTMEVVEMVLGKLNKEIVALINGLGGRSVGLSGKDANLIMANKKYSNDCQDIGFVGEVTGVNPQLLQTVIQEGYIPVVSPVGISTEGETYNINADTVASAIATALKADKLIILTDVEGILEDRQDKGTLISTVKMEDIPRLIERGVIQGGMIPKVECCMQAIQTGVATTHILDGRVPHSILLEVFTDKGIGTMVVSD.

Residues 64–65 (GG), Arg86, and Asn181 contribute to the substrate site.

It belongs to the acetylglutamate kinase family. ArgB subfamily.

Its subcellular location is the cytoplasm. The enzyme catalyses N-acetyl-L-glutamate + ATP = N-acetyl-L-glutamyl 5-phosphate + ADP. The protein operates within amino-acid biosynthesis; L-arginine biosynthesis; N(2)-acetyl-L-ornithine from L-glutamate: step 2/4. In terms of biological role, catalyzes the ATP-dependent phosphorylation of N-acetyl-L-glutamate. The sequence is that of Acetylglutamate kinase from Desulforamulus reducens (strain ATCC BAA-1160 / DSM 100696 / MI-1) (Desulfotomaculum reducens).